We begin with the raw amino-acid sequence, 776 residues long: MAAKRSIYCLLLLPLLLSLLIWIPSISLAATNPDDVAAINGLFAALGAPVLPGWIASGGDPCGEAWQGIICNVSDIISITVNAANLQGELGDNLAKFTSIRGIDFSNNRIGGSIPSTLPVTLQHFFLSANQFTGSIPESLGTLSFLNDMSLNDNLLSGELPDVFQNLVGLINLDISSNNISGTLPPSMENLLTLTTLRVQNNQLSGTLDVLQGLPLQDLNIENNLFSGPIPDKLLSIPKFLHEGNPFNATMINSTSTAPSLSPSLSPTKPAPTRPFSGVPPPPNERNRGKVADGPSDSEGSSSENSKGKNSSHTKKIILIAFAGVLVFIILVLAILLLLPKCARRREHANRVFKPHQVGADRGSRENALENGTPVLPPPGRSEKVQREPFKKAGEEPKVLHDLERLRRPAPISRQESQDIDFSMLMPPPPPPPPPPPPPPLDEKVTVMPIISPERPVKKTSPKRLPLTSVKHYSIASLQQYTESFAQENLIGSGMLGSVYRARLPNGKLFAVKKLDKRASEQQQDHEFIELVNNIDMIRHSNIVELVGYCAEHDQRLLVYEYCSNGTLQDGLHSDDEFKKKLSWNTRVSMALGAARALEYLHEVCEPPIIHRNFKSANVLLDDDLSVLVSDCGLAPLISSGSVSQLSGQLLAAYGYGAPEFDSGIYTWQSDVYSFGVVMLELLTGRMSYDRDRSRGEQFLVRWAIPQLHDIDALGKMVDPSLNGQYPAKSLSHFADIISRCVQSEPEFRPLMSEVVQDLLDMIRRERHGSGDSTAD.

A signal peptide spans 1–29 (MAAKRSIYCLLLLPLLLSLLIWIPSISLA). Topologically, residues 30–35 (ATNPDD) are cytoplasmic. The helical transmembrane segment at 36 to 56 (VAAINGLFAALGAPVLPGWIA) threads the bilayer. The Extracellular segment spans residues 57 to 316 (SGGDPCGEAW…KGKNSSHTKK (260 aa)). Asn-72 carries N-linked (GlcNAc...) asparagine glycosylation. 6 LRR repeats span residues 99-120 (SIRG…TLPV), 121-143 (TLQH…LGTL), 145-167 (FLND…FQNL), 169-191 (GLIN…MENL), 193-215 (TLTT…QGLP), and 216-236 (LQDL…KLLS). N-linked (GlcNAc...) asparagine glycosylation occurs at Asn-179. 2 N-linked (GlcNAc...) asparagine glycosylation sites follow: Asn-248 and Asn-253. Residues 251 to 311 (MINSTSTAPS…SSENSKGKNS (61 aa)) are disordered. Residues 254–268 (STSTAPSLSPSLSPT) show a composition bias toward low complexity. The span at 269–284 (KPAPTRPFSGVPPPPN) shows a compositional bias: pro residues. Residues 298 to 309 (SEGSSSENSKGK) are compositionally biased toward low complexity. Asn-310 carries N-linked (GlcNAc...) asparagine glycosylation. The chain crosses the membrane as a helical span at residues 317 to 337 (IILIAFAGVLVFIILVLAILL). At 338–776 (LLPKCARRRE…RHGSGDSTAD (439 aa)) the chain is on the cytoplasmic side. The interval 355 to 440 (PHQVGADRGS…PPPPPPPPPP (86 aa)) is disordered. A compositionally biased stretch (basic and acidic residues) spans 381-407 (RSEKVQREPFKKAGEEPKVLHDLERLR). The span at 426 to 440 (MPPPPPPPPPPPPPP) shows a compositional bias: pro residues. The Protein kinase domain occupies 485–763 (FAQENLIGSG…EVVQDLLDMI (279 aa)). Residues 491–499 (IGSGMLGSV) and Lys-513 contribute to the ATP site.

This sequence belongs to the protein kinase superfamily. Ser/Thr protein kinase family. In terms of tissue distribution, expressed in seedlings, roots, stems, leaves, flowers and siliques.

The protein resides in the membrane. Functionally, not essential for epidermal patterning and not redundant with STRUBBELIG. This is Protein STRUBBELIG-RECEPTOR FAMILY 3 (SRF3) from Arabidopsis thaliana (Mouse-ear cress).